Here is a 410-residue protein sequence, read N- to C-terminus: Lysosome-associated membrane glycoprotein 2 (410 aa).

The signal sequence occupies residues 1–28 (MVCFRLFPVPGSGLVLVCLVLGAVRSYA). Residues 29-192 (LELNLTDSEN…STNEFLCDKD (164 aa)) are first lumenal domain. Residues 29–375 (LELNLTDSEN…QDCSADDDNF (347 aa)) are Lumenal-facing. N32 and N38 each carry an N-linked (GlcNAc...) (polylactosaminoglycan) asparagine glycan. An intrachain disulfide couples C41 to C79. N-linked (GlcNAc...) asparagine glycans are attached at residues N49, N58, N75, N101, N123, and N179. C153 and C189 are oxidised to a cystine. The hinge stretch occupies residues 193–228 (KTSTVAPTIHTTVPSPTTTPTPKEKPEAGTYSVNNG). S195 carries O-linked (GalNAc...) serine glycosylation. O-linked (GalNAc...) threonine glycans are attached at residues T196, T200, T203, and T204. Residues 199-213 (PTIHTTVPSPTTTPT) are compositionally biased toward low complexity. A disordered region spans residues 199–221 (PTIHTTVPSPTTTPTPKEKPEAG). S207 carries O-linked (GalNAc...) serine; partial glycosylation. An O-linked (GalNAc...) threonine; partial glycan is attached at T209. T210 and T211 each carry an O-linked (GalNAc...) threonine glycan. O-linked (GalNAc...) threonine; partial glycosylation is present at T213. N-linked (GlcNAc...) asparagine glycosylation is found at N229, N242, N257, N275, and N300. The second lumenal domain stretch occupies residues 229-375 (NDTCLLATMG…QDCSADDDNF (147 aa)). Residues C232 and C265 are joined by a disulfide bond. The N-linked (GlcNAc...) (polylactosaminoglycan) asparagine glycan is linked to N307. Residues N317 and N356 are each glycosylated (N-linked (GlcNAc...) asparagine). C331 and C368 are joined by a disulfide. Residues 376-399 (LVPIAVGAALAGVLILVLLAYFIG) form a helical membrane-spanning segment. Over 400-410 (LKHHHAGYEQF) the chain is Cytoplasmic. The segment at 401–404 (KHHH) is important for binding and subsequent lysosomal degradation of target proteins.

The protein belongs to the LAMP family. Monomer. Homodimer. Homotrimer. Forms large homooligomers. Interacts (via its cytoplasmic region) with HSPA8; HSPA8 mediates recruitment of proteins with a KFERQ motif to the surface of the lysosome for chaperone-mediated autophagy. Interacts with HSP90 in the lysosome lumen; this enhances LAMP2 stability. Interacts with MLLT11. Interacts with ABCB9. Interacts with FURIN. Interacts with CT55; this interaction may be important for LAMP2 protein stability. Interacts with TMEM175; inhibiting the proton channel activity of TMEM175. Forms a ternary complex with RAB7A and RUFY4 (via RUN domain); the interaction with RAB7A is mediated by RUFY4 (via RUN and coiled coil domains). As to quaternary structure, (Microbial infection) Interacts with mumps virus protein F; this interaction promotes protein F cleavage by FURIN. Post-translationally, O- and N-glycosylated; some of the 16 N-linked glycans are polylactosaminoglycans. In terms of tissue distribution, isoform LAMP-2A is highly expressed in placenta, lung and liver, less in kidney and pancreas, low in brain and skeletal muscle. Isoform LAMP-2B is detected in spleen, thymus, prostate, testis, small intestine, colon, skeletal muscle, brain, placenta, lung, kidney, ovary and pancreas and liver. Isoform LAMP-2C is detected in small intestine, colon, heart, brain, skeletal muscle, and at lower levels in kidney and placenta.

The protein resides in the lysosome membrane. The protein localises to the endosome membrane. It is found in the cell membrane. It localises to the cytoplasmic vesicle. Its subcellular location is the autophagosome membrane. Functionally, lysosomal membrane glycoprotein which plays an important role in lysosome biogenesis, lysosomal pH regulation and autophagy. Acts as an important regulator of lysosomal lumen pH regulation by acting as a direct inhibitor of the proton channel TMEM175, facilitating lysosomal acidification for optimal hydrolase activity. Plays an important role in chaperone-mediated autophagy, a process that mediates lysosomal degradation of proteins in response to various stresses and as part of the normal turnover of proteins with a long biological half-live. Functions by binding target proteins, such as GAPDH, NLRP3 and MLLT11, and targeting them for lysosomal degradation. In the chaperone-mediated autophagy, acts downstream of chaperones, such as HSPA8/HSC70, which recognize and bind substrate proteins and mediate their recruitment to lysosomes, where target proteins bind LAMP2. Plays a role in lysosomal protein degradation in response to starvation. Required for the fusion of autophagosomes with lysosomes during autophagy. Cells that lack LAMP2 express normal levels of VAMP8, but fail to accumulate STX17 on autophagosomes, which is the most likely explanation for the lack of fusion between autophagosomes and lysosomes. Required for normal degradation of the contents of autophagosomes. Required for efficient MHC class II-mediated presentation of exogenous antigens via its function in lysosomal protein degradation; antigenic peptides generated by proteases in the endosomal/lysosomal compartment are captured by nascent MHC II subunits. Is not required for efficient MHC class II-mediated presentation of endogenous antigens. In terms of biological role, modulates chaperone-mediated autophagy. Decreases presentation of endogenous antigens by MHCII. Does not play a role in the presentation of exogenous and membrane-derived antigens by MHCII. (Microbial infection) Supports the FURIN-mediated cleavage of mumps virus fusion protein F by interacting with both FURIN and the unprocessed form but not the processed form of the viral protein F. In Homo sapiens (Human), this protein is Lysosome-associated membrane glycoprotein 2 (LAMP2).